Reading from the N-terminus, the 173-residue chain is Small ribosomal subunit protein uS5 (173 aa).

An S5 DRBM domain is found at 18–81 (YVEKLVKLNR…EKAKANMVTF (64 aa)).

It belongs to the universal ribosomal protein uS5 family. Part of the 30S ribosomal subunit. Contacts proteins S4 and S8.

In terms of biological role, with S4 and S12 plays an important role in translational accuracy. Located at the back of the 30S subunit body where it stabilizes the conformation of the head with respect to the body. The protein is Small ribosomal subunit protein uS5 of Treponema denticola (strain ATCC 35405 / DSM 14222 / CIP 103919 / JCM 8153 / KCTC 15104).